Reading from the N-terminus, the 303-residue chain is MGNDQADKKKFSWVIKNFSSLQSEKIYSDQFVIDGCRWRLLAFPKGNDTKSDHLSLYLDVAESESLPCGWRRHAQFSFTIVNHIPEKCSQRKETIHWFCEKVSDWGFTNLVPLIELKAEDSGFLVKGELKIVVEIEVLEVIGLLNVSESESMDVNGFHVLPSQAKYVKSLFEIHPDIATKFRIKNQYLKTGYMNVLLCLIETVRRSPKEISKNDLADAYVALESLTDHGFKLDWLKKKLDQVTQKKEKEAAGETRMHEIGEELKDLKLKCSDLEAQLDKEKADVLAAIAPLGSSDDGVFDDFF.

In terms of domain architecture, MATH spans 8 to 135 (KKKFSWVIKN…KGELKIVVEI (128 aa)). Residues 231 to 287 (KLDWLKKKLDQVTQKKEKEAAGETRMHEIGEELKDLKLKCSDLEAQLDKEKADVLAA) are a coiled coil.

This is MATH domain and coiled-coil domain-containing protein At3g58250 from Arabidopsis thaliana (Mouse-ear cress).